The sequence spans 141 residues: Nucleoside diphosphate kinase (141 aa).

ATP contacts are provided by lysine 11, phenylalanine 59, arginine 87, threonine 93, arginine 104, and asparagine 114. Histidine 117 functions as the Pros-phosphohistidine intermediate in the catalytic mechanism.

This sequence belongs to the NDK family. In terms of assembly, homotetramer. Mg(2+) serves as cofactor.

Its subcellular location is the cytoplasm. It carries out the reaction a 2'-deoxyribonucleoside 5'-diphosphate + ATP = a 2'-deoxyribonucleoside 5'-triphosphate + ADP. The catalysed reaction is a ribonucleoside 5'-diphosphate + ATP = a ribonucleoside 5'-triphosphate + ADP. Major role in the synthesis of nucleoside triphosphates other than ATP. The ATP gamma phosphate is transferred to the NDP beta phosphate via a ping-pong mechanism, using a phosphorylated active-site intermediate. In Polaromonas naphthalenivorans (strain CJ2), this protein is Nucleoside diphosphate kinase.